A 158-amino-acid chain; its full sequence is D-aminoacyl-tRNA deacylase (158 aa).

A Gly-cisPro motif, important for rejection of L-amino acids motif is present at residues 143–144 (GP).

Belongs to the DTD family. In terms of assembly, homodimer.

It localises to the cytoplasm. The catalysed reaction is glycyl-tRNA(Ala) + H2O = tRNA(Ala) + glycine + H(+). It carries out the reaction a D-aminoacyl-tRNA + H2O = a tRNA + a D-alpha-amino acid + H(+). Its function is as follows. An aminoacyl-tRNA editing enzyme that deacylates mischarged D-aminoacyl-tRNAs. Also deacylates mischarged glycyl-tRNA(Ala), protecting cells against glycine mischarging by AlaRS. Acts via tRNA-based rather than protein-based catalysis; rejects L-amino acids rather than detecting D-amino acids in the active site. By recycling D-aminoacyl-tRNA to D-amino acids and free tRNA molecules, this enzyme counteracts the toxicity associated with the formation of D-aminoacyl-tRNA entities in vivo and helps enforce protein L-homochirality. The polypeptide is D-aminoacyl-tRNA deacylase (Solidesulfovibrio magneticus (strain ATCC 700980 / DSM 13731 / RS-1) (Desulfovibrio magneticus)).